Here is a 372-residue protein sequence, read N- to C-terminus: Adaptive-response sensory kinase SasA (372 aa).

The region spanning 147 to 360 (MVAHELRTPL…CFHFTVPVWQ (214 aa)) is the Histidine kinase domain. The residue at position 150 (His-150) is a Phosphohistidine; by autocatalysis.

As to quaternary structure, homooligomerizes. Interacts with KaiC. Participates in the KaiBC complex, whose core is composed of a KaiC homohexamer and 6 KaiB.

The catalysed reaction is ATP + protein L-histidine = ADP + protein N-phospho-L-histidine.. In terms of biological role, member of the two-component regulatory system SasA/RpaA involved in genome-wide circadian gene expression. One of several clock output pathways. Participates in the Kai clock protein complex, the main circadian regulator in cyanobacteria, via its interaction with KaiC. KaiC enhances the autophosphorylation activity of SasA, which then transfers its phosphate group to RpaA to activate it. In addition to its output function, recruits fold-shifted KaiB (KaiB(fs)) to KaiC to cooperatively form the KaiB(6):KaiC(6) complex (independent of SasA kinase activity). Required for robustness of the circadian rhythm of gene expression and is involved in clock output, also required for adaptation to light/dark cycles. This is Adaptive-response sensory kinase SasA from Prochlorococcus marinus (strain MIT 9301).